A 227-amino-acid chain; its full sequence is NAD(P)H-hydrate epimerase (227 aa).

Residues 10–227 (MRALETAAFN…GKIMVQYIGL (218 aa)) form the YjeF N-terminal domain. 62–66 (NNGGD) lines the (6S)-NADPHX pocket. K(+) contacts are provided by asparagine 63 and aspartate 142. Residues 146 to 152 (GIGLNRP) and aspartate 176 each bind (6S)-NADPHX. K(+) is bound at residue serine 179.

The protein belongs to the NnrE/AIBP family. K(+) serves as cofactor.

It catalyses the reaction (6R)-NADHX = (6S)-NADHX. It carries out the reaction (6R)-NADPHX = (6S)-NADPHX. Its function is as follows. Catalyzes the epimerization of the S- and R-forms of NAD(P)HX, a damaged form of NAD(P)H that is a result of enzymatic or heat-dependent hydration. This is a prerequisite for the S-specific NAD(P)H-hydrate dehydratase to allow the repair of both epimers of NAD(P)HX. This chain is NAD(P)H-hydrate epimerase, found in Roseobacter litoralis (strain ATCC 49566 / DSM 6996 / JCM 21268 / NBRC 15278 / OCh 149).